Reading from the N-terminus, the 606-residue chain is Serine/threonine-protein kinase A-Raf (606 aa).

The RBD domain occupies 19-91; sequence GTVKVYLPNK…DGEELIVEVL (73 aa). The Phorbol-ester/DAG-type zinc-finger motif lies at 98-144; the sequence is MHNFVRKTFFSLAFCDFCLKFLFHGFRCQTCGYKFHQHCSSKVPTVC. The Zn(2+) site is built by histidine 99, cysteine 112, cysteine 115, cysteine 125, cysteine 128, histidine 133, cysteine 136, and cysteine 144. Phosphoserine is present on residues serine 157 and serine 162. Residues 160 to 207 are disordered; sequence DLSGGSRQHEAPSNRPLNELLTPQGPSPRTQHCDPEHFPFPAPANAPL. Threonine 181 carries the phosphothreonine modification. 2 positions are modified to phosphoserine: serine 186 and serine 214. The interval 240 to 290 is disordered; sequence STDAAGSRGGSDGTPRGSPSPASVSSGRKSPHSKSPAEQRERKSLADDKKK. Threonine 253 carries the phosphothreonine modification. Phosphoserine occurs at positions 257 and 269. Basic and acidic residues predominate over residues 274–289; that stretch reads SPAEQRERKSLADDKK. Residues 310–570 form the Protein kinase domain; sequence VQLLKRIGTG…PQILATIELL (261 aa). ATP-binding positions include 316–324 and lysine 336; that span reads IGTGSFGTV. The residue at position 318 (threonine 318) is a Phosphothreonine. Aspartate 429 serves as the catalytic Proton acceptor.

Belongs to the protein kinase superfamily. TKL Ser/Thr protein kinase family. RAF subfamily. As to quaternary structure, interacts with TH1L/NELFD. Requires Zn(2+) as cofactor. Post-translationally, dephosphorylation of Ser-214 by the SHOC2-MRAS-PP1c (SMP) complex consisting of SHOC2, GTP-bound M-Ras/MRAS and the catalytic subunit of protein phosphatase 1 (PPP1CA, PPP1CB or PPP1CC); this relieves inactivation and stimulates kinase activity. As to expression, predominantly in urogenital tissues.

The catalysed reaction is L-seryl-[protein] + ATP = O-phospho-L-seryl-[protein] + ADP + H(+). It carries out the reaction L-threonyl-[protein] + ATP = O-phospho-L-threonyl-[protein] + ADP + H(+). In terms of biological role, involved in the transduction of mitogenic signals from the cell membrane to the nucleus. May also regulate the TOR signaling cascade. Phosphorylates PFKFB2. Functionally, serves as a positive regulator of myogenic differentiation by inducing cell cycle arrest, the expression of myogenin and other muscle-specific proteins, and myotube formation. The chain is Serine/threonine-protein kinase A-Raf (ARAF) from Homo sapiens (Human).